Reading from the N-terminus, the 87-residue chain is Protein anon-73B1 (87 aa).

Residues 25–47 (LLIRYGLYVGALFQFVCISAAVL) traverse the membrane as a helical segment. The disordered stretch occupies residues 51–87 (NPDGQSNPESGEVTEREGEPVRTRLHKIRKLEKKKRR). Positions 63-72 (VTEREGEPVR) are enriched in basic and acidic residues. The span at 73 to 87 (TRLHKIRKLEKKKRR) shows a compositional bias: basic residues.

This sequence belongs to the UPF0239 family.

Its subcellular location is the membrane. The chain is Protein anon-73B1 (anon-73B1) from Drosophila melanogaster (Fruit fly).